Reading from the N-terminus, the 484-residue chain is tRNA-2-methylthio-N(6)-dimethylallyladenosine synthase (484 aa).

The 121-residue stretch at 29 to 149 folds into the MTTase N-terminal domain; it reads GVFHIHTLGC…LPKLLDQNRA (121 aa). 6 residues coordinate [4Fe-4S] cluster: cysteine 38, cysteine 78, cysteine 112, cysteine 186, cysteine 190, and cysteine 193. The Radical SAM core domain maps to 172 to 401; the sequence is RASRISSWVA…VALQEQITEE (230 aa). The 71-residue stretch at 404–474 folds into the TRAM domain; that stretch reads ATFEGRDVEV…RHNLLADPDV (71 aa).

This sequence belongs to the methylthiotransferase family. MiaB subfamily. Monomer. The cofactor is [4Fe-4S] cluster.

It is found in the cytoplasm. It carries out the reaction N(6)-dimethylallyladenosine(37) in tRNA + (sulfur carrier)-SH + AH2 + 2 S-adenosyl-L-methionine = 2-methylsulfanyl-N(6)-dimethylallyladenosine(37) in tRNA + (sulfur carrier)-H + 5'-deoxyadenosine + L-methionine + A + S-adenosyl-L-homocysteine + 2 H(+). Functionally, catalyzes the methylthiolation of N6-(dimethylallyl)adenosine (i(6)A), leading to the formation of 2-methylthio-N6-(dimethylallyl)adenosine (ms(2)i(6)A) at position 37 in tRNAs that read codons beginning with uridine. This is tRNA-2-methylthio-N(6)-dimethylallyladenosine synthase from Bifidobacterium longum subsp. infantis (strain ATCC 15697 / DSM 20088 / JCM 1222 / NCTC 11817 / S12).